The sequence spans 310 residues: Beta-carotene 3-hydroxylase 1, chloroplastic (310 aa).

Residues 1–51 (MAAGLSTAVTFKPLHRSFSSSSTDFRLRLPKSLSGFSPSLRFKRFSVCYVV) constitute a chloroplast transit peptide. Helical transmembrane passes span 98–118 (YLIA…MAVY) and 132–152 (MLEM…MEFW). Residues 145-272 (AAVGMEFWAR…KFNGVPYGLF (128 aa)) form the Fatty acid hydroxylase domain. Residues 157 to 162 (HRALWH) carry the Histidine box-1 motif. A Histidine box-2 motif is present at residues 169-173 (HESHH). 2 helical membrane-spanning segments follow: residues 183–203 (NDVF…YGFF) and 208–228 (VPGL…AYMF). The short motif at 230–235 (HDGLVH) is the Histidine box-3 element. The short motif at 256–260 (HQLHH) is the Histidine box-4 element.

The protein belongs to the sterol desaturase family. In terms of assembly, homodimer. In terms of tissue distribution, expressed in leaves, flowers, stems, roots and siliques.

It is found in the plastid. The protein resides in the chloroplast membrane. The enzyme catalyses all-trans-beta-carotene + 4 reduced [2Fe-2S]-[ferredoxin] + 2 O2 + 4 H(+) = all-trans-zeaxanthin + 4 oxidized [2Fe-2S]-[ferredoxin] + 2 H2O. Its function is as follows. Nonheme diiron monooxygenase involved in the biosynthesis of xanthophylls. Specific for beta-ring hydroxylations of beta-carotene. Also has a low activity toward the beta- and epsilon-rings of alpha-carotene. No activity with acyclic carotenoids such as lycopene and neurosporene. Uses ferredoxin as an electron donor. The sequence is that of Beta-carotene 3-hydroxylase 1, chloroplastic (BETA-OHASE 1) from Arabidopsis thaliana (Mouse-ear cress).